The chain runs to 370 residues: MPTETLQTGSMVKPVSPAGTFTSAVPLRILNKGPDYFRRQAEPNPKRLSAVERLEADKAKYVKSQEVINAKQEPVKPAVLAKPPVCPAAKRALGSPTLKVFGNHAKTESGVQRENLKLEILKNIINSSEGSSSGSGHKHSSRNWPPHRSEATDLHRHSFAESLKVYPTQGRSSPQEGGSHVGRRLLEQSAESFLHVSHSSSDIRKVTSVKPLKAIPCSSSAPPLPPKPKIAAIASMKSPEADPVEPACGVSRRPSLQRSKSDLSDRYFRVDADVERFFNYCGLDPEELENLGMENFARANSDIISLNFRSASMISSDCEQSQDSNSDLRNDDSANDRVPYGISAIERNARIIKWLYSIKQARESQKVSHV.

Disordered stretches follow at residues 127-151 (SSEG…RSEA) and 237-256 (KSPE…RPSL). Serine 238 and serine 301 each carry phosphoserine. The tract at residues 317 to 337 (DCEQSQDSNSDLRNDDSANDR) is disordered. Basic and acidic residues predominate over residues 326-335 (SDLRNDDSAN).

This sequence belongs to the FAM110 family.

Its subcellular location is the cytoplasm. It is found in the cytoskeleton. The protein resides in the microtubule organizing center. The protein localises to the centrosome. The sequence is that of Protein FAM110B (FAM110B) from Pongo abelii (Sumatran orangutan).